Consider the following 977-residue polypeptide: Myb-like protein I (977 aa).

The tract at residues 1–122 is disordered; sequence MMNNQSMVRY…QQQQQQLDKS (122 aa). Residues 21–39 show a composition bias toward pro residues; sequence PSPPVYSPIYRSPPPPPQP. Over residues 52–68 the composition is skewed to basic and acidic residues; that stretch reads DNSHHQVMDNSDHEQQQ. Over residues 75–118 the composition is skewed to low complexity; sequence QQQQQQQHHHQQQQQQQHHQQQQQQHHQQQQQHHHQQQQQQQQQ. One can recognise an HTH myb-type domain in the interval 167–222; it reads EKKKQSRYWTPEEHSRFIEALSKYGHKDVKSISQYVSTRNPTQVRTHAQKYFLRID. Positions 195–218 form a DNA-binding region, H-T-H motif; sequence VKSISQYVSTRNPTQVRTHAQKYF. Disordered regions lie at residues 229–331, 422–516, 531–650, 738–853, and 872–960; these read LESK…SSPL, INNN…SSQP, NNNN…QQQM, LNSN…WPGP, and NYVP…GMNQ. Acidic residues predominate over residues 241–252; sequence KDDDWLREEYND. The span at 254-275 shows a compositional bias: polar residues; it reads GSPTQYSSCSNSPTTNSVANPF. 2 stretches are compositionally biased toward low complexity: residues 276–329 and 422–504; these read SNSL…GNSS and INNN…INNN. Positions 505–516 are enriched in polar residues; the sequence is GPNSPNLLSSQP. Positions 738–754 are enriched in low complexity; sequence LNSNSGNSSPNISSING. Polar residues predominate over residues 783 to 797; it reads LSGSPSHSPAQSPHY. Low complexity-rich tracts occupy residues 798-848 and 887-943; these read NLNN…SHSI and SPHF…GSGS. A compositionally biased stretch (polar residues) spans 944-960; the sequence is WHQYQATDSPTGWGMNQ.

It is found in the nucleus. This chain is Myb-like protein I (mybI), found in Dictyostelium discoideum (Social amoeba).